Here is a 205-residue protein sequence, read N- to C-terminus: Recombination protein RecR (205 aa).

Residues 64–79 (CSRCYFITQNDLCAIC) form a C4-type zinc finger. The region spanning 87–182 (RIVCVVEEPL…RVTRLARGLP (96 aa)) is the Toprim domain.

The protein belongs to the RecR family.

Functionally, may play a role in DNA repair. It seems to be involved in an RecBC-independent recombinational process of DNA repair. It may act with RecF and RecO. The sequence is that of Recombination protein RecR from Roseiflexus castenholzii (strain DSM 13941 / HLO8).